The sequence spans 77 residues: Large ribosomal subunit protein eL14 (77 aa).

This sequence belongs to the eukaryotic ribosomal protein eL14 family.

This is Large ribosomal subunit protein eL14 from Methanococcus maripaludis (strain C5 / ATCC BAA-1333).